The primary structure comprises 239 residues: O-antigen export system ATP-binding protein RfbE (239 aa).

The ABC transporter domain occupies 28–239; that stretch reads VRVSTGGRIG…LIYEESMDIL (212 aa). 66–73 is an ATP binding site; the sequence is GHNGAGKS.

This sequence belongs to the ABC transporter superfamily.

It localises to the cell inner membrane. May form an ATP-driven O-antigen export apparatus, in association with RfbD. The sequence is that of O-antigen export system ATP-binding protein RfbE (rfbE) from Yersinia enterocolitica.